Consider the following 309-residue polypeptide: Ribokinase (309 aa).

Residues 14–16 (NAD), 42–46 (GKGAN), and Glu-143 contribute to the substrate site. ATP contacts are provided by residues Asn-187 and 223–228 (TLGSRG). 2 residues coordinate K(+): Asp-249 and Ile-251. ATP-binding positions include 254–255 (GD) and His-279. Asp-255 serves as a coordination point for substrate. Asp-255 functions as the Proton acceptor in the catalytic mechanism. Positions 285, 288, 290, and 294 each coordinate K(+).

The protein belongs to the carbohydrate kinase PfkB family. Ribokinase subfamily. In terms of assembly, homodimer. Mg(2+) serves as cofactor.

It localises to the cytoplasm. The catalysed reaction is D-ribose + ATP = D-ribose 5-phosphate + ADP + H(+). The protein operates within carbohydrate metabolism; D-ribose degradation; D-ribose 5-phosphate from beta-D-ribopyranose: step 2/2. With respect to regulation, activated by a monovalent cation that binds near, but not in, the active site. The most likely occupant of the site in vivo is potassium. Ion binding induces a conformational change that may alter substrate affinity. Its function is as follows. Catalyzes the phosphorylation of ribose at O-5 in a reaction requiring ATP and magnesium. The resulting D-ribose-5-phosphate can then be used either for sythesis of nucleotides, histidine, and tryptophan, or as a component of the pentose phosphate pathway. In Escherichia coli O157:H7, this protein is Ribokinase.